The primary structure comprises 293 residues: Probable metal transport system membrane protein TC_0698 (293 aa).

The next 7 helical transmembrane spans lie at 18–38, 41–61, 68–88, 101–121, 142–162, 186–206, and 242–262; these read SLLA…YIVV, IVSI…IALW, LPIS…ICIG, IISM…SKLP, DLYF…ICHT, FLLL…MGVI, and FLGI…IAIL.

This sequence belongs to the ABC-3 integral membrane protein family.

Its subcellular location is the cell inner membrane. Its function is as follows. Part of an ATP-driven transport system TC_0696/TC_0697/TC_0698 for a metal. The protein is Probable metal transport system membrane protein TC_0698 of Chlamydia muridarum (strain MoPn / Nigg).